The sequence spans 273 residues: Pyrroline-5-carboxylate reductase (273 aa).

Belongs to the pyrroline-5-carboxylate reductase family.

The protein localises to the cytoplasm. It carries out the reaction L-proline + NADP(+) = (S)-1-pyrroline-5-carboxylate + NADPH + 2 H(+). The enzyme catalyses L-proline + NAD(+) = (S)-1-pyrroline-5-carboxylate + NADH + 2 H(+). The protein operates within amino-acid biosynthesis; L-proline biosynthesis; L-proline from L-glutamate 5-semialdehyde: step 1/1. Its function is as follows. Catalyzes the reduction of 1-pyrroline-5-carboxylate (PCA) to L-proline. This is Pyrroline-5-carboxylate reductase from Pseudomonas aeruginosa (strain ATCC 15692 / DSM 22644 / CIP 104116 / JCM 14847 / LMG 12228 / 1C / PRS 101 / PAO1).